A 152-amino-acid chain; its full sequence is SsrA-binding protein (152 aa).

It belongs to the SmpB family.

The protein localises to the cytoplasm. In terms of biological role, required for rescue of stalled ribosomes mediated by trans-translation. Binds to transfer-messenger RNA (tmRNA), required for stable association of tmRNA with ribosomes. tmRNA and SmpB together mimic tRNA shape, replacing the anticodon stem-loop with SmpB. tmRNA is encoded by the ssrA gene; the 2 termini fold to resemble tRNA(Ala) and it encodes a 'tag peptide', a short internal open reading frame. During trans-translation Ala-aminoacylated tmRNA acts like a tRNA, entering the A-site of stalled ribosomes, displacing the stalled mRNA. The ribosome then switches to translate the ORF on the tmRNA; the nascent peptide is terminated with the 'tag peptide' encoded by the tmRNA and targeted for degradation. The ribosome is freed to recommence translation, which seems to be the essential function of trans-translation. The sequence is that of SsrA-binding protein from Rickettsia akari (strain Hartford).